We begin with the raw amino-acid sequence, 438 residues long: Aspartate--tRNA(Asp/Asn) ligase (438 aa).

Glutamate 176 contacts L-aspartate. The segment at 198–201 (QLYK) is aspartate. L-aspartate is bound at residue arginine 220. Residues 220-222 (RAE), 228-230 (RHL), and glutamate 361 each bind ATP. Mg(2+) is bound by residues glutamate 361 and serine 364. L-aspartate-binding residues include serine 364 and arginine 368. 409-412 (GADR) is a binding site for ATP.

This sequence belongs to the class-II aminoacyl-tRNA synthetase family. Type 2 subfamily. Homodimer. The cofactor is Mg(2+).

The protein localises to the cytoplasm. The catalysed reaction is tRNA(Asx) + L-aspartate + ATP = L-aspartyl-tRNA(Asx) + AMP + diphosphate. Its function is as follows. Aspartyl-tRNA synthetase with relaxed tRNA specificity since it is able to aspartylate not only its cognate tRNA(Asp) but also tRNA(Asn). Reaction proceeds in two steps: L-aspartate is first activated by ATP to form Asp-AMP and then transferred to the acceptor end of tRNA(Asp/Asn). This Methanococcus vannielii (strain ATCC 35089 / DSM 1224 / JCM 13029 / OCM 148 / SB) protein is Aspartate--tRNA(Asp/Asn) ligase.